The following is a 173-amino-acid chain: Large ribosomal subunit protein bL12m (173 aa).

The N-terminal 33 residues, 1-33, are a transit peptide targeting the mitochondrion; that stretch reads MFRIASRQTRNLRALSSSKNWARSLVNTRSFRA.

This sequence belongs to the bacterial ribosomal protein bL12 family. As to quaternary structure, component of the mitochondrial large ribosomal subunit (mt-LSU). Mature yeast 74S mitochondrial ribosomes consist of a small (37S) and a large (54S) subunit. The 37S small subunit contains a 15S ribosomal RNA (15S mt-rRNA) and at least 32 different proteins. The 54S large subunit contains a 21S rRNA (21S mt-rRNA) and at least 45 different proteins.

The protein resides in the mitochondrion. Its function is as follows. Component of the mitochondrial ribosome (mitoribosome), a dedicated translation machinery responsible for the synthesis of mitochondrial genome-encoded proteins, including at least some of the essential transmembrane subunits of the mitochondrial respiratory chain. The mitoribosomes are attached to the mitochondrial inner membrane and translation products are cotranslationally integrated into the membrane. The polypeptide is Large ribosomal subunit protein bL12m (mrpl12) (Schizosaccharomyces pombe (strain 972 / ATCC 24843) (Fission yeast)).